A 279-amino-acid chain; its full sequence is Pantothenate synthetase (279 aa).

Position 26 to 33 (26 to 33 (MGNLHEGH)) interacts with ATP. His33 acts as the Proton donor in catalysis. Residue Gln57 coordinates (R)-pantoate. Residue Gln57 coordinates beta-alanine. 144–147 (GKKD) is a binding site for ATP. Gln150 lines the (R)-pantoate pocket. Residues Val173 and 181-184 (LSSR) each bind ATP.

The protein belongs to the pantothenate synthetase family. In terms of assembly, homodimer.

Its subcellular location is the cytoplasm. It catalyses the reaction (R)-pantoate + beta-alanine + ATP = (R)-pantothenate + AMP + diphosphate + H(+). It functions in the pathway cofactor biosynthesis; (R)-pantothenate biosynthesis; (R)-pantothenate from (R)-pantoate and beta-alanine: step 1/1. Functionally, catalyzes the condensation of pantoate with beta-alanine in an ATP-dependent reaction via a pantoyl-adenylate intermediate. The sequence is that of Pantothenate synthetase from Burkholderia ambifaria (strain MC40-6).